Here is a 443-residue protein sequence, read N- to C-terminus: D-alanyl-D-alanine carboxypeptidase DacA (443 aa).

The first 31 residues, 1–31 (MNIKKCKQLLMSLVVLTLAVTCLAPMSKAKA), serve as a signal peptide directing secretion. The active-site Acyl-ester intermediate is the S67. The Proton acceptor role is filled by K70. S131 is an active-site residue. K258 is a binding site for substrate.

Belongs to the peptidase S11 family.

It localises to the secreted. The protein localises to the cell wall. Its subcellular location is the cell membrane. The protein resides in the membrane raft. The catalysed reaction is Preferential cleavage: (Ac)2-L-Lys-D-Ala-|-D-Ala. Also transpeptidation of peptidyl-alanyl moieties that are N-acyl substituents of D-alanine.. It functions in the pathway cell wall biogenesis; peptidoglycan biosynthesis. Functionally, removes C-terminal D-alanyl residues from sugar-peptide cell wall precursors. This is D-alanyl-D-alanine carboxypeptidase DacA (dacA) from Bacillus subtilis (strain 168).